A 301-amino-acid polypeptide reads, in one-letter code: Cilia- and flagella-associated protein 161 (301 aa).

It is found in the cytoplasm. The protein resides in the cytoskeleton. The protein localises to the cilium axoneme. Functionally, microtubule inner protein (MIP) part of the dynein-decorated doublet microtubules (DMTs) in cilia axoneme, which is required for motile cilia beating. In Danio rerio (Zebrafish), this protein is Cilia- and flagella-associated protein 161.